A 240-amino-acid polypeptide reads, in one-letter code: UDP-2,3-diacylglucosamine hydrolase (240 aa).

Residues Asp8, His10, Asp41, Asn79, and His114 each contribute to the Mn(2+) site. Position 79–80 (79–80 (NR)) interacts with substrate. Substrate contacts are provided by Asp122, Ser160, Asn164, Lys167, and His195. Residues His195 and His197 each contribute to the Mn(2+) site.

The protein belongs to the LpxH family. Requires Mn(2+) as cofactor.

The protein localises to the cell inner membrane. It carries out the reaction UDP-2-N,3-O-bis[(3R)-3-hydroxytetradecanoyl]-alpha-D-glucosamine + H2O = 2-N,3-O-bis[(3R)-3-hydroxytetradecanoyl]-alpha-D-glucosaminyl 1-phosphate + UMP + 2 H(+). The protein operates within glycolipid biosynthesis; lipid IV(A) biosynthesis; lipid IV(A) from (3R)-3-hydroxytetradecanoyl-[acyl-carrier-protein] and UDP-N-acetyl-alpha-D-glucosamine: step 4/6. Hydrolyzes the pyrophosphate bond of UDP-2,3-diacylglucosamine to yield 2,3-diacylglucosamine 1-phosphate (lipid X) and UMP by catalyzing the attack of water at the alpha-P atom. Involved in the biosynthesis of lipid A, a phosphorylated glycolipid that anchors the lipopolysaccharide to the outer membrane of the cell. The chain is UDP-2,3-diacylglucosamine hydrolase from Pectobacterium carotovorum subsp. carotovorum (strain PC1).